A 184-amino-acid chain; its full sequence is Ribosome-recycling factor (184 aa).

Belongs to the RRF family.

The protein localises to the cytoplasm. Responsible for the release of ribosomes from messenger RNA at the termination of protein biosynthesis. May increase the efficiency of translation by recycling ribosomes from one round of translation to another. This chain is Ribosome-recycling factor, found in Mycoplasma pneumoniae (strain ATCC 29342 / M129 / Subtype 1) (Mycoplasmoides pneumoniae).